The sequence spans 301 residues: Vomeronasal type-1 receptor 4 (301 aa).

Residues 1–5 (MASRY) are Extracellular-facing. Residues 6 to 26 (VAVGMILSQTVVGVLGSFSVL) form a helical membrane-spanning segment. Residues 27–48 (LHYLSFYCTGCRLRSTDLIVKH) are Cytoplasmic-facing. A helical membrane pass occupies residues 49-69 (LIVANFLALRCKGVPQTMAAF). At 70–88 (GVRYFLNALGCKLVFYLHR) the chain is on the extracellular side. The chain crosses the membrane as a helical span at residues 89-109 (VGRGVSIGTTCLLSVFQVITV). Topologically, residues 110-126 (SSRKSRWAKLKEKAPKH) are cytoplasmic. Residues 127-147 (VGFSVLLCWIVCMLVNIIFPM) form a helical membrane-spanning segment. Residues 148 to 185 (YVTGKWNYTNITVNEDLGYCSGGGNNKIAQTLRAMLLS) are Extracellular-facing. N-linked (GlcNAc...) asparagine glycosylation is found at asparagine 154 and asparagine 157. The helical transmembrane segment at 186 to 206 (FPDVLCLGLMLWVSSSMVCIL) threads the bilayer. The Cytoplasmic portion of the chain corresponds to 207–234 (HRHKQRVQHIDRSNLSPRASPENRATQS). Residues 235-255 (ILILVSTFVSSYTLSCLFQVC) traverse the membrane as a helical segment. Residues 256-264 (MALLDNPNS) are Extracellular-facing. A helical membrane pass occupies residues 265 to 285 (LLVNTSALMSVCFPTLSPFVL). At 286-301 (MSCDPSVYRFCFAWKR) the chain is on the cytoplasmic side.

The protein belongs to the G-protein coupled receptor 1 family.

The protein resides in the cell membrane. Its function is as follows. Putative pheromone receptor. The sequence is that of Vomeronasal type-1 receptor 4 (VN1R4) from Homo sapiens (Human).